Consider the following 529-residue polypeptide: Lysophosphatidylcholine acyltransferase 2 (529 aa).

The Cytoplasmic portion of the chain corresponds to Met1–Arg50. Residues Ala51 to Gly71 traverse the membrane as a helical; Signal-anchor for type II membrane protein segment. Residues Gln72–Asp529 lie on the Lumenal side of the membrane. The HXXXXD motif signature appears at His128–Asp133. An EGTC motif motif is present at residues Glu202–Cys205. Asn207 is a glycosylation site (N-linked (GlcNAc...) asparagine). 3 consecutive EF-hand domains span residues Pro373–Pro408, Asn410–Val445, and Asp449–Tyr480. Ca(2+) contacts are provided by Asp386, Asn388, Asp390, Thr392, Glu397, Asp423, Asp425, Asp427, Cys429, Glu434, Asp458, Asp460, Ser462, His464, and Glu469.

Belongs to the 1-acyl-sn-glycerol-3-phosphate acyltransferase family.

It is found in the endoplasmic reticulum membrane. It localises to the golgi apparatus membrane. The protein localises to the cell membrane. The protein resides in the lipid droplet. The catalysed reaction is a 1-acyl-sn-glycero-3-phosphocholine + an acyl-CoA = a 1,2-diacyl-sn-glycero-3-phosphocholine + CoA. The enzyme catalyses a 1-O-alkyl-sn-glycero-3-phosphocholine + acetyl-CoA = a 1-O-alkyl-2-acetyl-sn-glycero-3-phosphocholine + CoA. It carries out the reaction a 1-acyl-sn-glycero-3-phosphate + an acyl-CoA = a 1,2-diacyl-sn-glycero-3-phosphate + CoA. It catalyses the reaction a 1-O-(1Z-alkenyl)-sn-glycero-3-phosphocholine + an acyl-CoA = a 1-O-(1Z-alkenyl)-2-acyl-sn-glycero-3-phosphocholine + CoA. The catalysed reaction is 1-hexadecanoyl-sn-glycero-3-phosphate + (9Z)-octadecenoyl-CoA = 1-hexadecanoyl-2-(9Z-octadecenoyl)-sn-glycero-3-phosphate + CoA. The enzyme catalyses 1-(9Z-octadecenoyl)-sn-glycero-3-phosphate + (9Z)-octadecenoyl-CoA = 1,2-di-(9Z-octadecenoyl)-sn-glycero-3-phosphate + CoA. It carries out the reaction 1-(9Z-octadecenoyl)-sn-glycero-3-phosphate + hexadecanoyl-CoA = 1-(9Z)-octadecenoyl-2-hexadecanoyl-sn-glycero-3-phosphate + CoA. It catalyses the reaction 1-heptadecanoyl-sn-glycero-3-phosphate + (9Z)-octadecenoyl-CoA = 1-heptadecanoyl-2-(9Z)-octadecenoyl-sn-glycero-3-phosphate + CoA. The catalysed reaction is 1-octadecanoyl-sn-glycero-3-phosphate + (9Z)-octadecenoyl-CoA = 1-octadecanoyl-2-(9Z-octadecenoyl)-sn-glycero-3-phosphate + CoA. The enzyme catalyses heptadecanoyl-CoA + 1-(9Z-octadecenoyl)-sn-glycero-3-phosphate = 1-(9Z)-octadecenoyl-2-heptadecanoyl-sn-glycero-3-phosphate + CoA. It carries out the reaction 1-(9Z-octadecenoyl)-sn-glycero-3-phosphate + (9Z,12Z)-octadecadienoyl-CoA = 1-(9Z)-octadecenoyl-2-(9Z,12Z)-octadecadienoyl-sn-glycero-3-phosphate + CoA. It catalyses the reaction 1-(9Z-octadecenoyl)-sn-glycero-3-phosphate + tetradecanoyl-CoA = 1-(9Z)-octadecenoyl-2-tetradecanoyl-sn-glycero-3-phosphate + CoA. The catalysed reaction is pentadecanoyl-CoA + 1-(9Z-octadecenoyl)-sn-glycero-3-phosphate = 1-(9Z)-octadecenoyl-2-pentadecanoyl-sn-glycero-3-phosphate + CoA. The enzyme catalyses nonadecanoyl-CoA + 1-(9Z-octadecenoyl)-sn-glycero-3-phosphate = 1-(9Z)-octadecenoyl-2-nonadecanoyl-sn-glycero-3-phosphate + CoA. It carries out the reaction 1-hexadecanoyl-sn-glycero-3-phosphocholine + (9Z)-octadecenoyl-CoA = 1-hexadecanoyl-2-(9Z-octadecenoyl)-sn-glycero-3-phosphocholine + CoA. It catalyses the reaction 1-O-hexadecyl-sn-glycero-3-phosphocholine + acetyl-CoA = 1-O-hexadecyl-2-acetyl-sn-glycero-3-phosphocholine + CoA. The catalysed reaction is 1-O-octadecyl-sn-glycero-3-phosphocholine + acetyl-CoA = 1-O-octadecyl-2-acetyl-sn-glycero-3-phosphocholine + CoA. The enzyme catalyses 1-hexadecanoyl-sn-glycero-3-phosphocholine + acetyl-CoA = 1-hexadecanoyl-2-acetyl-sn-glycero-3-phosphocholine + CoA. It carries out the reaction 1-octadecanoyl-sn-glycero-3-phosphocholine + acetyl-CoA = 1-octadecanoyl-2-acetyl-sn-glycero-3-phosphocholine + CoA. It catalyses the reaction a 1-O-(1Z-alkenyl)-sn-glycero-3-phosphocholine + acetyl-CoA = 1-O-(1Z)-alkenyl-2-acetyl-sn-glycero-3-phosphocholine + CoA. The catalysed reaction is 1-O-octadecyl-sn-glycero-3-phosphocholine + (5Z,8Z,11Z,14Z)-eicosatetraenoyl-CoA = 1-O-octadecyl-2-(5Z,8Z,11Z,14Z)-eicosatetraenoyl-sn-glycero-3-phosphocholine + CoA. The protein operates within lipid metabolism; phospholipid metabolism. In terms of biological role, exhibits both acyltransferase and acetyltransferase activities. Activity is calcium-dependent. Catalyzes the conversion of lysophosphatidylcholine (1-acyl-sn-glycero-3-phosphocholine or LPC) into phosphatidylcholine (1,2-diacyl-sn-glycero-3-phosphocholine or PC). Catalyzes the conversion 1-acyl-sn-glycerol-3-phosphate (lysophosphatidic acid or LPA) into 1,2-diacyl-sn-glycerol-3-phosphate (phosphatidic acid or PA) by incorporating an acyl moiety at the sn-2 position of the glycerol backbone. Involved in platelet-activating factor (PAF) biosynthesis by catalyzing the conversion of the PAF precursor, 1-O-alkyl-sn-glycero-3-phosphocholine (lyso-PAF) into 1-O-alkyl-2-acetyl-sn-glycero-3-phosphocholine (PAF). This Danio rerio (Zebrafish) protein is Lysophosphatidylcholine acyltransferase 2 (lpcat2).